Reading from the N-terminus, the 118-residue chain is Large ribosomal subunit protein uL18 (118 aa).

It belongs to the universal ribosomal protein uL18 family. In terms of assembly, part of the 50S ribosomal subunit; part of the 5S rRNA/L5/L18/L25 subcomplex. Contacts the 5S and 23S rRNAs.

Its function is as follows. This is one of the proteins that bind and probably mediate the attachment of the 5S RNA into the large ribosomal subunit, where it forms part of the central protuberance. The chain is Large ribosomal subunit protein uL18 from Levilactobacillus brevis (strain ATCC 367 / BCRC 12310 / CIP 105137 / JCM 1170 / LMG 11437 / NCIMB 947 / NCTC 947) (Lactobacillus brevis).